Reading from the N-terminus, the 505-residue chain is Maturase K (505 aa).

Belongs to the intron maturase 2 family. MatK subfamily.

It localises to the plastid. Its subcellular location is the chloroplast. Functionally, usually encoded in the trnK tRNA gene intron. Probably assists in splicing its own and other chloroplast group II introns. The sequence is that of Maturase K from Phaulothamnus spinescens (Snake-eyes).